The primary structure comprises 326 residues: tRNA-modifying protein YgfZ (326 aa).

Residues Trp27 and Trp189 each contribute to the folate site.

Belongs to the tRNA-modifying YgfZ family.

Its subcellular location is the cytoplasm. Its function is as follows. Folate-binding protein involved in regulating the level of ATP-DnaA and in the modification of some tRNAs. It is probably a key factor in regulatory networks that act via tRNA modification, such as initiation of chromosomal replication. The protein is tRNA-modifying protein YgfZ of Escherichia coli (strain SE11).